Reading from the N-terminus, the 135-residue chain is uncharacterized protein (135 aa).

The disordered stretch occupies residues 1–75 (MAAATETGQA…PPPRPPQRRC (75 aa)).

This is an uncharacterized protein from Homo sapiens (Human).